The following is a 173-amino-acid chain: Crossover junction endodeoxyribonuclease RuvC (173 aa).

Residues Asp-8, Glu-67, and Asp-139 contribute to the active site. Residues Asp-8, Glu-67, and Asp-139 each contribute to the Mg(2+) site.

It belongs to the RuvC family. As to quaternary structure, homodimer which binds Holliday junction (HJ) DNA. The HJ becomes 2-fold symmetrical on binding to RuvC with unstacked arms; it has a different conformation from HJ DNA in complex with RuvA. In the full resolvosome a probable DNA-RuvA(4)-RuvB(12)-RuvC(2) complex forms which resolves the HJ. It depends on Mg(2+) as a cofactor.

The protein resides in the cytoplasm. It carries out the reaction Endonucleolytic cleavage at a junction such as a reciprocal single-stranded crossover between two homologous DNA duplexes (Holliday junction).. The RuvA-RuvB-RuvC complex processes Holliday junction (HJ) DNA during genetic recombination and DNA repair. Endonuclease that resolves HJ intermediates. Cleaves cruciform DNA by making single-stranded nicks across the HJ at symmetrical positions within the homologous arms, yielding a 5'-phosphate and a 3'-hydroxyl group; requires a central core of homology in the junction. The consensus cleavage sequence is 5'-(A/T)TT(C/G)-3'. Cleavage occurs on the 3'-side of the TT dinucleotide at the point of strand exchange. HJ branch migration catalyzed by RuvA-RuvB allows RuvC to scan DNA until it finds its consensus sequence, where it cleaves and resolves the cruciform DNA. The polypeptide is Crossover junction endodeoxyribonuclease RuvC (Vibrio campbellii (strain ATCC BAA-1116)).